A 329-amino-acid polypeptide reads, in one-letter code: 3'-5' exonuclease (329 aa).

The disordered stretch occupies residues Glu26–Glu88. Over residues Lys46–Pro65 the composition is skewed to basic and acidic residues. Phosphoserine occurs at positions 78 and 86. Residues Thr130–Glu288 form the 3'-5' exonuclease domain. Mg(2+)-binding residues include Asp138, Glu140, and Asp276.

Belongs to the WRNexo family.

The protein resides in the nucleus. Has exonuclease activity on both single-stranded and duplex templates bearing overhangs, but not blunt ended duplex DNA, and cleaves in a 3'-5' direction. Essential for the formation of DNA replication focal centers. Has an important role in maintaining genome stability. The chain is 3'-5' exonuclease from Drosophila mojavensis (Fruit fly).